A 235-amino-acid chain; its full sequence is Small ribosomal subunit protein eS4 (235 aa).

The region spanning 37-100 (LPLGIIIRDI…NEAYRMLQDE (64 aa)) is the S4 RNA-binding domain.

Belongs to the eukaryotic ribosomal protein eS4 family.

The chain is Small ribosomal subunit protein eS4 from Methanosarcina acetivorans (strain ATCC 35395 / DSM 2834 / JCM 12185 / C2A).